We begin with the raw amino-acid sequence, 134 residues long: UPF0412 protein YaaI (134 aa).

An N-terminal signal peptide occupies residues 1-23; the sequence is MKSVFTLSASLAISLLLCCTAQA.

The protein belongs to the UPF0412 family.

In Escherichia coli O7:K1 (strain IAI39 / ExPEC), this protein is UPF0412 protein YaaI.